A 371-amino-acid chain; its full sequence is Cytochrome b (371 aa).

4 helical membrane-spanning segments follow: residues 25–45, 69–90, 105–125, and 170–190; these read FGSM…FLAV, WMMQ…YIHI, WMSG…GYVL, and FFAL…LHII. Residues H75 and H89 each contribute to the heme b site. Heme b contacts are provided by H174 and H188. An a ubiquinone-binding site is contributed by H193. 4 helical membrane-spanning segments follow: residues 218–238, 280–300, 312–332, and 339–358; these read HKDL…SSFF, LGGA…PFTH, LSQL…WAAT, and FIVI…LSTP.

The protein belongs to the cytochrome b family. In terms of assembly, the cytochrome bc1 complex contains 3 respiratory subunits (MT-CYB, CYC1 and UQCRFS1), 2 core proteins (UQCRC1 and UQCRC2) and probably 6 low-molecular weight proteins. It depends on heme b as a cofactor.

The protein resides in the mitochondrion inner membrane. In terms of biological role, component of the ubiquinol-cytochrome c reductase complex (complex III or cytochrome b-c1 complex) that is part of the mitochondrial respiratory chain. The b-c1 complex mediates electron transfer from ubiquinol to cytochrome c. Contributes to the generation of a proton gradient across the mitochondrial membrane that is then used for ATP synthesis. This is Cytochrome b (MT-CYB) from Aspidites melanocephalus (Black-headed python).